The primary structure comprises 552 residues: Dihydroxy-acid dehydratase (552 aa).

Residue Cys46 participates in [2Fe-2S] cluster binding. Residue Asp78 participates in Mg(2+) binding. Cys119 contributes to the [2Fe-2S] cluster binding site. Residues Asp120 and Lys121 each coordinate Mg(2+). Position 121 is an N6-carboxylysine (Lys121). Cys191 contributes to the [2Fe-2S] cluster binding site. Glu442 contributes to the Mg(2+) binding site. The active-site Proton acceptor is Ser468.

This sequence belongs to the IlvD/Edd family. In terms of assembly, homodimer. It depends on [2Fe-2S] cluster as a cofactor. Requires Mg(2+) as cofactor.

It carries out the reaction (2R)-2,3-dihydroxy-3-methylbutanoate = 3-methyl-2-oxobutanoate + H2O. The catalysed reaction is (2R,3R)-2,3-dihydroxy-3-methylpentanoate = (S)-3-methyl-2-oxopentanoate + H2O. The protein operates within amino-acid biosynthesis; L-isoleucine biosynthesis; L-isoleucine from 2-oxobutanoate: step 3/4. It participates in amino-acid biosynthesis; L-valine biosynthesis; L-valine from pyruvate: step 3/4. Functionally, functions in the biosynthesis of branched-chain amino acids. Catalyzes the dehydration of (2R,3R)-2,3-dihydroxy-3-methylpentanoate (2,3-dihydroxy-3-methylvalerate) into 2-oxo-3-methylpentanoate (2-oxo-3-methylvalerate) and of (2R)-2,3-dihydroxy-3-methylbutanoate (2,3-dihydroxyisovalerate) into 2-oxo-3-methylbutanoate (2-oxoisovalerate), the penultimate precursor to L-isoleucine and L-valine, respectively. The polypeptide is Dihydroxy-acid dehydratase (Picrophilus torridus (strain ATCC 700027 / DSM 9790 / JCM 10055 / NBRC 100828 / KAW 2/3)).